A 258-amino-acid chain; its full sequence is HVA22-like protein j (258 aa).

Residues 153–258 (AANQPPTERN…RSNSRTQPAA (106 aa)) are disordered. Residues 156-169 (QPPTERNVNMNAQS) are compositionally biased toward polar residues. Pro residues predominate over residues 206–215 (WPPPTPPPTP).

This sequence belongs to the DP1 family.

This Arabidopsis thaliana (Mouse-ear cress) protein is HVA22-like protein j (HVA22J).